A 156-amino-acid polypeptide reads, in one-letter code: Small ribosomal subunit protein uS7 (156 aa).

It belongs to the universal ribosomal protein uS7 family. As to quaternary structure, part of the 30S ribosomal subunit. Contacts proteins S9 and S11.

One of the primary rRNA binding proteins, it binds directly to 16S rRNA where it nucleates assembly of the head domain of the 30S subunit. Is located at the subunit interface close to the decoding center, probably blocks exit of the E-site tRNA. In Solibacter usitatus (strain Ellin6076), this protein is Small ribosomal subunit protein uS7.